A 353-amino-acid polypeptide reads, in one-letter code: C-X-C chemokine receptor type 4 (353 aa).

An important for chemokine binding and signaling region spans residues 1 to 22 (MEELHIYPSDNYTEEDLGSGDY). Residues 1–39 (MEELHIYPSDNYTEEDLGSGDYDSMKEPCFREENAHFNR) are Extracellular-facing. Tyrosine 7 is subject to Sulfotyrosine. N-linked (GlcNAc...) asparagine glycosylation is present at asparagine 11. Tyrosine 12 bears the Sulfotyrosine mark. Serine 19 carries an O-linked (Xyl...) (chondroitin sulfate) serine glycan. Tyrosine 22 is modified (sulfotyrosine). Cystine bridges form between cysteine 29–cysteine 275 and cysteine 110–cysteine 187. A helical membrane pass occupies residues 40–64 (IFLPTVYSIIFLTGIVGNGLVILVM). Residues 65–78 (GYQKKLRSMTDKYR) lie on the Cytoplasmic side of the membrane. A helical transmembrane segment spans residues 79–100 (LHLSVADLLFVLTLPFWAVEAV). The interval 95 to 98 (WAVE) is chemokine binding. Topologically, residues 101–111 (ANWYFGNFLCK) are extracellular. A helical membrane pass occupies residues 112 to 131 (AVHVIYTVNLYSSVLILAFI). The tract at residues 114 to 118 (HVIYT) is chemokine binding. At 132-155 (SLDRYLAIVHATNSQRPRKLLAEK) the chain is on the cytoplasmic side. An Important for signaling motif is present at residues 134 to 136 (DRY). The involved in dimerization; when bound to chemokine stretch occupies residues 136 to 148 (YLAIVHATNSQRP). A helical membrane pass occupies residues 156–175 (VVYVGVWIPALLLTIPDFIF). Over 176 to 196 (ANVREADDRYICDRFYPNDSW) the chain is Extracellular. Positions 187–191 (CDRFY) are chemokine binding, important for signaling. Residues 192–211 (PNDSWLVVFQFQHIMVGLIL) form an involved in dimerization region. Residues 197 to 217 (LVVFQFQHIMVGLILPGIVIL) traverse the membrane as a helical segment. Residues 218-242 (SCYCIIISKLSHSKGYQKRKALKTT) lie on the Cytoplasmic side of the membrane. The helical transmembrane segment at 243–262 (VILILAFFACWLPYYIGISI) threads the bilayer. The Extracellular segment spans residues 263–283 (DSFILLEIIKQGCEFEKTVHK). An involved in dimerization region spans residues 267-269 (LLE). Residues 284–303 (WISITEALAFFHCCLNPILY) traverse the membrane as a helical segment. Residues 304 to 353 (AFLGAKFKTSAQHALTSVSRGSSLKILSKGKRGGHSSVSTESESSSFHSS) lie on the Cytoplasmic side of the membrane. A phosphoserine mark is found at serine 320 and serine 322. Serine 325 and serine 326 each carry phosphoserine; by PKC and GRK6. A disordered region spans residues 330–353 (LSKGKRGGHSSVSTESESSSFHSS). A Phosphoserine; by GRK6 modification is found at serine 331. Residue lysine 332 forms a Glycyl lysine isopeptide (Lys-Gly) (interchain with G-Cter in ubiquitin) linkage. A compositionally biased stretch (low complexity) spans 338–353 (HSSVSTESESSSFHSS). Serine 340 is subject to Phosphoserine; by GRK6. Phosphoserine occurs at positions 349 and 352.

It belongs to the G-protein coupled receptor 1 family. In terms of assembly, monomer. Can form homodimers. Interacts with CD164. Interacts with ARRB2; the interaction is dependent on the C-terminal phosphorylation of CXCR4 and allows activation of MAPK1 and MAPK3. Interacts with ARR3; the interaction is dependent on the C-terminal phosphorylation of CXCR4 and modulates calcium mobilization. Interacts with RNF113A; the interaction, enhanced by CXCL12, promotes CXCR4 ubiquitination and subsequent degradation. Interacts (via the cytoplasmic C-terminal) with ITCH (via the WW domains I and II); the interaction, enhanced by CXCL12, promotes CXCR4 ubiquitination and leads to its degradation. Interacts with extracellular ubiquitin. Interacts with DBN1; this interaction is enhanced by antigenic stimulation. Following LPS binding, may form a complex with GDF5, HSP90AA1 and HSPA8. Phosphorylated on agonist stimulation. Rapidly phosphorylated on serine and threonine residues in the C-terminal. Phosphorylation at Ser-325 and Ser-326 leads to recruitment of ITCH, ubiquitination and protein degradation. Post-translationally, ubiquitinated after ligand binding, leading to its degradation. Ubiquitinated by ITCH at the cell membrane on agonist stimulation. The ubiquitin-dependent mechanism, endosomal sorting complex required for transport (ESCRT), then targets CXCR4 for lysosomal degradation. This process is dependent also on prior Ser-/Thr-phosphorylation in the C-terminal of CXCR4. Also binding of ARRB1 to STAM negatively regulates CXCR4 sorting to lysosomes though modulating ubiquitination of SFR5S. In terms of processing, sulfation is required for efficient binding of CXCL12/SDF-1alpha and promotes its dimerization. O- and N-glycosylated. N-glycosylation can mask coreceptor function. The O-glycosylation chondroitin sulfate attachment does not affect interaction with CXCL12/SDF-1alpha nor its coreceptor activity.

The protein localises to the cell membrane. It is found in the cell junction. The protein resides in the early endosome. It localises to the late endosome. Its subcellular location is the lysosome. Its function is as follows. Receptor for the C-X-C chemokine CXCL12/SDF-1 that transduces a signal by increasing intracellular calcium ion levels and enhancing MAPK1/MAPK3 activation. Involved in the AKT signaling cascade. Plays a role in regulation of cell migration, e.g. during wound healing. Acts as a receptor for extracellular ubiquitin; leading to enhanced intracellular calcium ions and reduced cellular cAMP levels. Binds bacterial lipopolysaccharide (LPS) et mediates LPS-induced inflammatory response, including TNF secretion by monocytes. Involved in hematopoiesis and in cardiac ventricular septum formation. Also plays an essential role in vascularization of the gastrointestinal tract, probably by regulating vascular branching and/or remodeling processes in endothelial cells. Involved in cerebellar development. In the CNS, could mediate hippocampal-neuron survival. In Canis lupus familiaris (Dog), this protein is C-X-C chemokine receptor type 4 (CXCR4).